We begin with the raw amino-acid sequence, 818 residues long: Dipeptidyl-peptidase 7 (818 aa).

Positions 1–22 (MKLKRILLSVALLCGIGTTAMA) are cleaved as a signal peptide. Catalysis depends on charge relay system residues His-87, Asp-223, and Ser-645.

It belongs to the peptidase S46 family.

Its function is as follows. Catalyzes the removal of dipeptides from the N-terminus of oligopeptides. Most efficiently cleaves the synthetic substrate Met-Leu-methylcoumaryl-7-amide (Met-Leu-MCA), and slowly hydrolyzes Leu-Gln-, Lys-Ala-, Leu-Arg, and Ala-Asn-MCA. Is likely involved in amino acid metabolism and bacterial growth/survival of asaccharolytic P.endodontalis, that utilizes amino acids from extracellular proteinaceous nutrients as energy and carbon sources. The polypeptide is Dipeptidyl-peptidase 7 (Porphyromonas endodontalis (strain ATCC 35406 / DSM 24491 / JCM 8526 / CCUG 16442 / BCRC 14492 / NCTC 13058 / HG 370) (Bacteroides endodontalis)).